Here is a 301-residue protein sequence, read N- to C-terminus: Ribosomal RNA small subunit methyltransferase A (301 aa).

The S-adenosyl-L-methionine site is built by asparagine 29, leucine 31, glycine 56, glutamate 77, aspartate 102, and asparagine 127.

It belongs to the class I-like SAM-binding methyltransferase superfamily. rRNA adenine N(6)-methyltransferase family. RsmA subfamily.

It is found in the cytoplasm. It catalyses the reaction adenosine(1518)/adenosine(1519) in 16S rRNA + 4 S-adenosyl-L-methionine = N(6)-dimethyladenosine(1518)/N(6)-dimethyladenosine(1519) in 16S rRNA + 4 S-adenosyl-L-homocysteine + 4 H(+). In terms of biological role, specifically dimethylates two adjacent adenosines (A1518 and A1519) in the loop of a conserved hairpin near the 3'-end of 16S rRNA in the 30S particle. May play a critical role in biogenesis of 30S subunits. The sequence is that of Ribosomal RNA small subunit methyltransferase A from Halothermothrix orenii (strain H 168 / OCM 544 / DSM 9562).